The primary structure comprises 310 residues: 4-hydroxythreonine-4-phosphate dehydrogenase (310 aa).

Thr-129 serves as a coordination point for substrate. A divalent metal cation-binding residues include His-158, His-202, and His-250. Substrate is bound by residues Lys-258, Asn-267, and Arg-276.

Belongs to the PdxA family. Homodimer. Requires a divalent metal cation as cofactor.

It is found in the cytoplasm. It catalyses the reaction 4-(phosphooxy)-L-threonine + NAD(+) = 3-amino-2-oxopropyl phosphate + CO2 + NADH. The protein operates within cofactor biosynthesis; pyridoxine 5'-phosphate biosynthesis; pyridoxine 5'-phosphate from D-erythrose 4-phosphate: step 4/5. Its function is as follows. Catalyzes the NAD(P)-dependent oxidation of 4-(phosphooxy)-L-threonine (HTP) into 2-amino-3-oxo-4-(phosphooxy)butyric acid which spontaneously decarboxylates to form 3-amino-2-oxopropyl phosphate (AHAP). The protein is 4-hydroxythreonine-4-phosphate dehydrogenase of Hydrogenobaculum sp. (strain Y04AAS1).